Consider the following 297-residue polypeptide: Lipoprotein NlpD/LppB homolog (297 aa).

An N-terminal signal peptide occupies residues 1–22; the sequence is MDKGEGLRLAATLRQWTRLYGG. Residue Cys-23 is the site of N-palmitoyl cysteine attachment. The S-diacylglycerol cysteine moiety is linked to residue Cys-23. The LysM domain occupies 67–111; sequence GQYIVRRGDTLYSIAFRFGWDWKALAARNGIAPPYTIQVGQAIQF. Positions 134–168 are disordered; it reads TKPTPVPPAVSTSVPAKPAPAPASTTTPPSSGATP.

This sequence belongs to the E.coli NlpD/Haemophilus LppB family.

It localises to the cell inner membrane. The protein is Lipoprotein NlpD/LppB homolog of Pseudomonas aeruginosa (strain ATCC 15692 / DSM 22644 / CIP 104116 / JCM 14847 / LMG 12228 / 1C / PRS 101 / PAO1).